We begin with the raw amino-acid sequence, 225 residues long: MSMLDGEWAKAVGAEFKKPYYRDLYNFVRDEYATHVVYPPADDIFNAMHFTPLDKVKVLILGQDPYHNVNQAHGLSFSVLPSQKDIPPSLQNIYKELHDDLGCDIPNNGYLKKWADQGVLLLNTVLTVRAHQANSHQGHGWEKFTDAIIEAVNEQDRPIVYMLWGRPAQSKIPMLTNPKHLILKAPHPSPLSAYRGFFGCKHFSKANEFLKEHGVEPVDWQIEDI.

Catalysis depends on aspartate 64, which acts as the Proton acceptor.

This sequence belongs to the uracil-DNA glycosylase (UDG) superfamily. UNG family.

The protein localises to the cytoplasm. It catalyses the reaction Hydrolyzes single-stranded DNA or mismatched double-stranded DNA and polynucleotides, releasing free uracil.. Its function is as follows. Excises uracil residues from the DNA which can arise as a result of misincorporation of dUMP residues by DNA polymerase or due to deamination of cytosine. The polypeptide is Uracil-DNA glycosylase (Agathobacter rectalis (strain ATCC 33656 / DSM 3377 / JCM 17463 / KCTC 5835 / VPI 0990) (Eubacterium rectale)).